The primary structure comprises 154 residues: UPF0178 protein SPO3827 (154 aa).

This sequence belongs to the UPF0178 family.

The sequence is that of UPF0178 protein SPO3827 from Ruegeria pomeroyi (strain ATCC 700808 / DSM 15171 / DSS-3) (Silicibacter pomeroyi).